Reading from the N-terminus, the 375-residue chain is Alcohol dehydrogenase 1A (375 aa).

Position 2 is an N-acetylserine (Ser2). Ser23 is subject to Phosphoserine. The residue at position 35 (Tyr35) is a Phosphotyrosine. Cys47 is a Zn(2+) binding site. 48 to 52 serves as a coordination point for NAD(+); the sequence is GTDDH. The Zn(2+) site is built by His68, Cys98, Cys101, Cys104, Cys112, and Cys175. NAD(+) is bound by residues 200 to 205, Asp224, Lys229, Ile270, 293 to 295, 318 to 320, and Arg370; these read GLGGVG, VGV, and AVY.

The protein belongs to the zinc-containing alcohol dehydrogenase family. As to quaternary structure, dimer of identical or heterodimer of closely related subunits alpha, beta, or gamma that are encoded by genes ADH1A, ADH1B, and ADH1C, respectively. Zn(2+) serves as cofactor.

It localises to the cytoplasm. It carries out the reaction a primary alcohol + NAD(+) = an aldehyde + NADH + H(+). The catalysed reaction is a secondary alcohol + NAD(+) = a ketone + NADH + H(+). The enzyme catalyses butan-1-ol + NAD(+) = butanal + NADH + H(+). It catalyses the reaction 1-propanol + NAD(+) = propanal + NADH + H(+). It carries out the reaction propan-2-ol + NAD(+) = acetone + NADH + H(+). Alcohol dehydrogenase. Oxidizes primary as well as secondary alcohols. Ethanol is a very poor substrate. This Macaca mulatta (Rhesus macaque) protein is Alcohol dehydrogenase 1A (ADH1A).